Here is a 516-residue protein sequence, read N- to C-terminus: Probable D,D-dipeptide-binding periplasmic protein DdpA (516 aa).

An N-terminal signal peptide occupies residues 1–25 (MKRSISFRPTLLALVLATNFPVAHA).

The protein belongs to the bacterial solute-binding protein 5 family. In terms of assembly, the complex is composed of two ATP-binding proteins (DdpD and DdpF), two transmembrane proteins (DdpB and DdpC) and a solute-binding protein (DdpA).

It localises to the periplasm. Functionally, part of the ABC transporter complex DdpABCDF, which is probably involved in D,D-dipeptide transport. The protein is Probable D,D-dipeptide-binding periplasmic protein DdpA (ddpA) of Escherichia coli (strain K12).